The following is a 399-amino-acid chain: Enoyl-[acyl-carrier-protein] reductase [NADH] (399 aa).

NAD(+) is bound by residues 48 to 53 (GASTGY), 74 to 75 (FE), 111 to 112 (DA), and 139 to 140 (LA). Tyrosine 225 contributes to the substrate binding site. Tyrosine 235 acts as the Proton donor in catalysis. Residues lysine 244 and 274 to 276 (VVT) contribute to the NAD(+) site.

This sequence belongs to the TER reductase family. Monomer.

The catalysed reaction is a 2,3-saturated acyl-[ACP] + NAD(+) = a (2E)-enoyl-[ACP] + NADH + H(+). It functions in the pathway lipid metabolism; fatty acid biosynthesis. Its function is as follows. Involved in the final reduction of the elongation cycle of fatty acid synthesis (FAS II). Catalyzes the reduction of a carbon-carbon double bond in an enoyl moiety that is covalently linked to an acyl carrier protein (ACP). The polypeptide is Enoyl-[acyl-carrier-protein] reductase [NADH] (Yersinia enterocolitica serotype O:8 / biotype 1B (strain NCTC 13174 / 8081)).